A 2725-amino-acid polypeptide reads, in one-letter code: Teneurin-1 (2725 aa).

Positions 1–48 (MEQTDCKPYQPLPKVKHEMDLAYTSSSDESEDGRKPRQSYNSRETLHE) are disordered. The region spanning 1–318 (MEQTDCKPYQ…KPYRCCNWKC (318 aa)) is the Teneurin N-terminal domain. Residues 1–324 (MEQTDCKPYQ…NWKCTALSAT (324 aa)) lie on the Cytoplasmic side of the membrane. The Nuclear localization signal (NLS) motif lies at 62 to 65 (RKRK). Ser105 carries the post-translational modification Phosphoserine. Phosphothreonine is present on Thr109. The residue at position 116 (Ser116) is a Phosphoserine. The segment covering 174-189 (AGSTQDVQSSPHNQFT) has biased composition (polar residues). The tract at residues 174–241 (AGSTQDVQSS…PAPPTSTQDS (68 aa)) is disordered. Residues 192 to 201 (PLPPPPPPPH) are compositionally biased toward pro residues. Residues 290-297 (PPPRPLPR) carry the Required for interaction with SORBS1 (Ten-1 ICD form) motif. The chain crosses the membrane as a helical span at residues 325–345 (AITVTLALLLAYVIAVHLFGL). Over 346-2725 (TWQLQPVEGE…FMRQSEIGRR (2380 aa)) the chain is Extracellular. Asn433 carries N-linked (GlcNAc...) asparagine glycosylation. EGF-like domains are found at residues 528–559 (IMDDCSTNCNGNGECISGHCHCFPGFLGPDCA), 560–591 (RDSCPVLCGGNGEYEKGHCVCRHGWKGPECDV), 592–624 (PEEQCIDPTCFGHGTCIMGVCICVPGYKGEICE), 625–657 (EEDCLDPMCSNHGICVKGECHCSTGWGGVNCET), 658–691 (PLPVCQEQCSGHGTFLLDAGVCSCDPKWTGSDCS), 692–721 (TELCTMECGSHGVCSRGICQCEEGWVGPTC), 722–753 (EERSCHSHCTEHGQCKDGKCECSPGWEGDHCT), and 761–796 (VRDGCPGLCFGNGRCTLDQNGWHCVCQVGWSGTGCN). Intrachain disulfides connect Cys532-Cys542, Cys536-Cys547, Cys549-Cys558, Cys567-Cys578, Cys580-Cys589, Cys596-Cys607, Cys601-Cys612, Cys614-Cys623, Cys628-Cys639, Cys633-Cys644, Cys646-Cys655, Cys666-Cys679, Cys681-Cys690, Cys695-Cys705, Cys699-Cys710, Cys712-Cys721, Cys726-Cys736, Cys730-Cys741, Cys743-Cys752, Cys765-Cys775, Cys769-Cys784, and Cys786-Cys795. N-linked (GlcNAc...) asparagine glycans are attached at residues Asn905 and Asn1084. NHL repeat units follow at residues 1194–1219 (LFAPVALASGPDGSVYVGDFNFVRRI), 1292–1336 (SHCG…NAVI), 1351–1402 (LSCD…IAGR), 1414–1458 (FLVS…VTTN), and 1481–1524 (CFSG…ISRN). The YD 1 repeat unit spans residues 1534–1553 (YEIASPADQELYQFTVNGTH). 2 N-linked (GlcNAc...) asparagine glycosylation sites follow: Asn1550 and Asn1567. YD repeat units follow at residues 1570-1590 (YNSEGDLGAITSSNGNSVHIR), 1608-1632 (YWLTISSNGVLKRVSAQGYNLALMT), 1633-1654 (YPGNTGLLATKSNENGWTTVYE), and 1655-1675 (YDPEGHLTNATFPTGEVSSFH). Asn1663, Asn1699, Asn1757, Asn1781, and Asn1842 each carry an N-linked (GlcNAc...) asparagine glycan. YD repeat units follow at residues 1845-1864 (YSPSGLVTFIQRGTWNEKME), 1865-1885 (YDQSGKIISRTWADGKIWSYT), 1886-1904 (YLEKSVMLLLHSQRRYIFE), 1905-1925 (YDQPDCLLSVTMPSMVRHSLQ), 1933-1949 (YRNIYTPPDSSTSFIQD), 1950-1969 (YSRDGRLLQTLHLGTGRRVL), 1970-1989 (YKYTKQARLSEVLYDTTQVT), 1992-2012 (YEESSGVIKTIHLMHDGFICT), 2015-2035 (YRQTGPLIGRQIFRFSEEGLV), 2085-2105 (YDLNQVITTTVMKHTKIFSAN), and 2113-2133 (YEILKAIAYWMTIQYDNVGRM). The N-linked (GlcNAc...) asparagine glycan is linked to Asn2145. YD repeat units follow at residues 2153 to 2173 (YDADGQLQTVSVNDKTQWRYS), 2174 to 2194 (YDLNGNINLLSHGKSARLTPL), 2196 to 2216 (YDLRDRITRLGEIQYKMDEDG), 2228 to 2248 (YNSNGLLQKAYNKASGWTVQY), and 2250 to 2270 (YDGLGRRVASKSSLGQHLQFF). An N-linked (GlcNAc...) asparagine glycan is attached at Asn2285. YD repeat units follow at residues 2296-2313 (YDLQGHLIAMELSSGEEY) and 2314-2337 (YVACDNTGTPLAVFSSRGQVIKEI). Ser2580 carries the phosphoserine modification. The N-linked (GlcNAc...) asparagine glycan is linked to Asn2602.

It belongs to the tenascin family. Teneurin subfamily. Homodimer; disulfide-linked. Heterodimer with either TENM2 or TENM3. May also form heterodimer with TENM4. Ten-1 ICD interacts with SORBS1 (via third SH3 domain). Interacts with MBD1. Ten-1 ICD interacts with HINT1. In terms of processing, derives from the plasma membrane form by proteolytic processing. Further proteolytic cleavage may be generated. As to expression, expressed in fetal brain.

It is found in the cell membrane. The protein localises to the nucleus. The protein resides in the nucleus speckle. Its subcellular location is the nucleus matrix. It localises to the cytoplasm. It is found in the cytoskeleton. Its function is as follows. Involved in neural development, regulating the establishment of proper connectivity within the nervous system. May function as a cellular signal transducer. Functionally, plays a role in the regulation of neuroplasticity in the limbic system. Mediates a rapid reorganization of actin- and tubulin-based cytoskeleton elements with an increase in dendritic arborization and spine density formation of neurons in the hippocampus and amygdala. Induces BDNF transcription inhibition in neurons. Activates the mitogen-activated protein (MAP) kinase 2 (MEK2) and extracellular signal-regulated kinase (ERK) cascade. Also acts as a bioactive neuroprotective peptide on limbic neurons of the brain and regulates stress-induced behavior: attenuates alkalosis-associated necrotic cell death and the effects of corticotropin-releasing factor (CRF) on c-fos/FOS induction and on the reinstatement of cocaine seeking. In terms of biological role, induces gene transcription activation. The chain is Teneurin-1 (TENM1) from Homo sapiens (Human).